A 278-amino-acid polypeptide reads, in one-letter code: 2-dehydro-3-deoxyphosphooctonate aldolase (278 aa).

This sequence belongs to the KdsA family.

It localises to the cytoplasm. The enzyme catalyses D-arabinose 5-phosphate + phosphoenolpyruvate + H2O = 3-deoxy-alpha-D-manno-2-octulosonate-8-phosphate + phosphate. Its pathway is carbohydrate biosynthesis; 3-deoxy-D-manno-octulosonate biosynthesis; 3-deoxy-D-manno-octulosonate from D-ribulose 5-phosphate: step 2/3. The protein operates within bacterial outer membrane biogenesis; lipopolysaccharide biosynthesis. This Fusobacterium nucleatum subsp. nucleatum (strain ATCC 25586 / DSM 15643 / BCRC 10681 / CIP 101130 / JCM 8532 / KCTC 2640 / LMG 13131 / VPI 4355) protein is 2-dehydro-3-deoxyphosphooctonate aldolase.